Consider the following 510-residue polypeptide: Cytochrome P450 monooxygenase penQ (510 aa).

The chain crosses the membrane as a helical span at residues 9–26; that stretch reads WIVTLIVAATTYCTLRWV. N148 and N341 each carry an N-linked (GlcNAc...) asparagine glycan. C448 contributes to the heme binding site. An N-linked (GlcNAc...) asparagine glycan is attached at N482.

Belongs to the cytochrome P450 family. Requires heme as cofactor.

The protein localises to the membrane. It functions in the pathway secondary metabolite biosynthesis. Its function is as follows. Cytochrome P450 monooxygenase; part of the gene cluster that mediates the biosynthesis of the indole diterpenes penitrems. The geranylgeranyl diphosphate (GGPP) synthase penG catalyzes the first step in penitrem biosynthesis via conversion of farnesyl pyrophosphate and isopentyl pyrophosphate into geranylgeranyl pyrophosphate (GGPP). Condensation of indole-3-glycerol phosphate with GGPP by the prenyl transferase penC then forms 3-geranylgeranylindole (3-GGI). Epoxidation by the FAD-dependent monooxygenase penM leads to a epoxidized-GGI that is substrate of the terpene cyclase penB for cyclization to yield paspaline. Paspaline is subsequently converted to 13-desoxypaxilline by the cytochrome P450 monooxygenase penP, the latter being then converted to paxilline by the cytochrome P450 monooxygenase penQ. Paxilline is converted to beta-paxitriol via C-10 ketoreduction by the short-chain dehydrogenase PC-15 which can be monoprenylated at the C-20 by the indole diterpene prenyltransferase penD. A two-step elimination (acetylation and elimination) process performed by the O-acetyltransferase PC-16 and the P.simplicissimum ptmI-ortholog not yet identified in P.crustosum, leads to the production of the prenylated form of penijanthine. The FAD-linked oxidoreductase ptmO then converts the prenylated form of penijanthine into PC-M5 which is in turn transformed into PC-M4 by the aromatic dimethylallyltransferase PC-22. A series of oxidation steps involving 4 cytochrome P450 monooxygenases (PC-21, PC-05, PC-23, PC-20) and a FAD-dependent monooxygenase (PC-14) are required for the transformation of PC-M4 to penitrems A and E. Synthesis of these final products is proposed to proceed via penitrems D and C (PC-21, PC-05, PC-14) and penitrems B and F (PC-21, PC-05, PC-14, PC-23). In Penicillium crustosum (Blue mold fungus), this protein is Cytochrome P450 monooxygenase penQ.